Reading from the N-terminus, the 30-residue chain is Ampulexin 3 (30 aa).

An N-terminal signal peptide occupies residues 1-17 (MKAIMVLFYVMTLTIIG).

Monomer. In terms of tissue distribution, expressed in venom sac and, to a lesser extent, in venom gland. Not expressed in brain.

The protein resides in the secreted. This Ampulex compressa (Emerald cockroach wasp) protein is Ampulexin 3.